The sequence spans 295 residues: Elongation factor Ts (295 aa).

The interval 79 to 82 is involved in Mg(2+) ion dislocation from EF-Tu; sequence TDFV.

This sequence belongs to the EF-Ts family.

The protein localises to the cytoplasm. Functionally, associates with the EF-Tu.GDP complex and induces the exchange of GDP to GTP. It remains bound to the aminoacyl-tRNA.EF-Tu.GTP complex up to the GTP hydrolysis stage on the ribosome. The sequence is that of Elongation factor Ts from Mycoplasma mycoides subsp. mycoides SC (strain CCUG 32753 / NCTC 10114 / PG1).